We begin with the raw amino-acid sequence, 336 residues long: Ketol-acid reductoisomerase (NADP(+)) 1 (336 aa).

One can recognise a KARI N-terminal Rossmann domain in the interval 2-181 (AKVYYEKDVT…GATRAGVLET (180 aa)). NADP(+) contacts are provided by residues 25–28 (YGSQ), Arg48, Ser52, and 82–85 (DELQ). The active site involves His107. Gly133 serves as a coordination point for NADP(+). In terms of domain architecture, KARI C-terminal knotted spans 182–327 (TFKEETETDL…RKLRGMMPFV (146 aa)). 4 residues coordinate Mg(2+): Asp190, Glu194, Glu226, and Glu230. Ser251 is a binding site for substrate.

The protein belongs to the ketol-acid reductoisomerase family. The cofactor is Mg(2+).

It carries out the reaction (2R)-2,3-dihydroxy-3-methylbutanoate + NADP(+) = (2S)-2-acetolactate + NADPH + H(+). The enzyme catalyses (2R,3R)-2,3-dihydroxy-3-methylpentanoate + NADP(+) = (S)-2-ethyl-2-hydroxy-3-oxobutanoate + NADPH + H(+). The protein operates within amino-acid biosynthesis; L-isoleucine biosynthesis; L-isoleucine from 2-oxobutanoate: step 2/4. Its pathway is amino-acid biosynthesis; L-valine biosynthesis; L-valine from pyruvate: step 2/4. Functionally, involved in the biosynthesis of branched-chain amino acids (BCAA). Catalyzes an alkyl-migration followed by a ketol-acid reduction of (S)-2-acetolactate (S2AL) to yield (R)-2,3-dihydroxy-isovalerate. In the isomerase reaction, S2AL is rearranged via a Mg-dependent methyl migration to produce 3-hydroxy-3-methyl-2-ketobutyrate (HMKB). In the reductase reaction, this 2-ketoacid undergoes a metal-dependent reduction by NADPH to yield (R)-2,3-dihydroxy-isovalerate. The protein is Ketol-acid reductoisomerase (NADP(+)) 1 of Bacillus anthracis.